A 262-amino-acid polypeptide reads, in one-letter code: Glutamate racemase (262 aa).

Residues 5–6 and 37–38 contribute to the substrate site; these read DS and YG. The active-site Proton donor/acceptor is the Cys69. 70 to 71 provides a ligand contact to substrate; it reads NT. Cys181 functions as the Proton donor/acceptor in the catalytic mechanism. 182–183 provides a ligand contact to substrate; sequence TH.

The protein belongs to the aspartate/glutamate racemases family.

It catalyses the reaction L-glutamate = D-glutamate. It participates in cell wall biogenesis; peptidoglycan biosynthesis. Provides the (R)-glutamate required for cell wall biosynthesis. The sequence is that of Glutamate racemase from Buchnera aphidicola subsp. Acyrthosiphon pisum (strain 5A).